The sequence spans 505 residues: Apolipoprotein N-acyltransferase (505 aa).

7 helical membrane-spanning segments follow: residues 6–26 (PSIL…CLAF), 29–49 (FDIW…ATLV), 53–73 (TAML…VQWV), 80–100 (FGGV…SYLG), 119–139 (FVLA…FTGF), 152–172 (PFAQ…VILL), and 189–209 (TFTK…LQFV). A CN hydrolase domain is found at 223-469 (IQANIEQQLK…TNTLTAEIAT (247 aa)). Residue glutamate 263 is the Proton acceptor of the active site. Lysine 328 is a catalytic residue. Cysteine 379 functions as the Nucleophile in the catalytic mechanism. Residues 475–495 (LFGQFGHWLIYSLSFICVAFG) form a helical membrane-spanning segment.

The protein belongs to the CN hydrolase family. Apolipoprotein N-acyltransferase subfamily.

Its subcellular location is the cell inner membrane. The catalysed reaction is N-terminal S-1,2-diacyl-sn-glyceryl-L-cysteinyl-[lipoprotein] + a glycerophospholipid = N-acyl-S-1,2-diacyl-sn-glyceryl-L-cysteinyl-[lipoprotein] + a 2-acyl-sn-glycero-3-phospholipid + H(+). It functions in the pathway protein modification; lipoprotein biosynthesis (N-acyl transfer). Its function is as follows. Catalyzes the phospholipid dependent N-acylation of the N-terminal cysteine of apolipoprotein, the last step in lipoprotein maturation. The chain is Apolipoprotein N-acyltransferase from Haemophilus ducreyi (strain 35000HP / ATCC 700724).